The sequence spans 338 residues: tRNA N6-adenosine threonylcarbamoyltransferase (338 aa).

Residues H109 and H113 each contribute to the Fe cation site. Substrate contacts are provided by residues 132 to 136 (AISGA), D165, G178, and N277. D302 is a Fe cation binding site.

This sequence belongs to the KAE1 / TsaD family. The cofactor is Fe(2+).

The protein resides in the cytoplasm. It carries out the reaction L-threonylcarbamoyladenylate + adenosine(37) in tRNA = N(6)-L-threonylcarbamoyladenosine(37) in tRNA + AMP + H(+). In terms of biological role, required for the formation of a threonylcarbamoyl group on adenosine at position 37 (t(6)A37) in tRNAs that read codons beginning with adenine. Is involved in the transfer of the threonylcarbamoyl moiety of threonylcarbamoyl-AMP (TC-AMP) to the N6 group of A37, together with TsaE and TsaB. TsaD likely plays a direct catalytic role in this reaction. The sequence is that of tRNA N6-adenosine threonylcarbamoyltransferase from Chlamydia trachomatis serovar A (strain ATCC VR-571B / DSM 19440 / HAR-13).